A 1033-amino-acid chain; its full sequence is uncharacterized protein (1033 aa).

Coiled coils occupy residues 212–326, 405–582, 615–771, and 797–1019; these read EIFK…KMNN, ILNN…LYKF, LEKE…LKLN, and KMKI…NIDN.

This is an uncharacterized protein from Plasmodium falciparum (isolate 3D7).